The primary structure comprises 361 residues: UDP-3-O-acylglucosamine N-acyltransferase (361 aa).

Residue His253 is the Proton acceptor of the active site.

Belongs to the transferase hexapeptide repeat family. LpxD subfamily. As to quaternary structure, homotrimer.

It catalyses the reaction a UDP-3-O-[(3R)-3-hydroxyacyl]-alpha-D-glucosamine + a (3R)-hydroxyacyl-[ACP] = a UDP-2-N,3-O-bis[(3R)-3-hydroxyacyl]-alpha-D-glucosamine + holo-[ACP] + H(+). It participates in bacterial outer membrane biogenesis; LPS lipid A biosynthesis. Functionally, catalyzes the N-acylation of UDP-3-O-acylglucosamine using 3-hydroxyacyl-ACP as the acyl donor. Is involved in the biosynthesis of lipid A, a phosphorylated glycolipid that anchors the lipopolysaccharide to the outer membrane of the cell. This is UDP-3-O-acylglucosamine N-acyltransferase from Burkholderia pseudomallei (strain 668).